We begin with the raw amino-acid sequence, 82 residues long: Small ribosomal subunit protein bS20 (82 aa).

It belongs to the bacterial ribosomal protein bS20 family.

Functionally, binds directly to 16S ribosomal RNA. The sequence is that of Small ribosomal subunit protein bS20 from Streptococcus pyogenes serotype M12 (strain MGAS2096).